The chain runs to 283 residues: Poly(3-hydroxyalkanoate) depolymerase (283 aa).

The region spanning 30 to 253 is the AB hydrolase-1 domain; the sequence is PLLIFNGIGA…IDDGHLFLIT (224 aa). Residue serine 102 is the Charge relay system of the active site.

The protein belongs to the AB hydrolase superfamily. Lipase family.

Complements a mutant that does not degrade PHA; might be a lipase. This chain is Poly(3-hydroxyalkanoate) depolymerase, found in Ectopseudomonas oleovorans (Pseudomonas oleovorans).